A 137-amino-acid polypeptide reads, in one-letter code: Small ribosomal subunit protein uS9c (137 aa).

The tract at residues 106–137 is disordered; that stretch reads KSEGYLTRDPRVKERKKYGLKKARKAPQFSKR. The segment covering 118 to 137 has biased composition (basic residues); the sequence is KERKKYGLKKARKAPQFSKR.

It belongs to the universal ribosomal protein uS9 family.

Its subcellular location is the plastid. It localises to the chloroplast. The sequence is that of Small ribosomal subunit protein uS9c (rps9) from Pyropia yezoensis (Susabi-nori).